The primary structure comprises 147 residues: Large ribosomal subunit protein uL22c (147 aa).

The protein belongs to the universal ribosomal protein uL22 family. Part of the 50S ribosomal subunit.

Its subcellular location is the plastid. Functionally, this protein binds specifically to 23S rRNA. Its function is as follows. The globular domain of the protein is located near the polypeptide exit tunnel on the outside of the subunit, while an extended beta-hairpin is found that lines the wall of the exit tunnel in the center of the 70S ribosome. The polypeptide is Large ribosomal subunit protein uL22c (rpl22) (Cuscuta gronovii (Common dodder)).